The sequence spans 452 residues: tRNA modification GTPase MnmE (452 aa).

(6S)-5-formyl-5,6,7,8-tetrahydrofolate contacts are provided by Arg-21, Glu-78, and Lys-118. Positions 214 to 375 constitute a TrmE-type G domain; the sequence is GMKVVIAGRP…LREHLKQAMG (162 aa). Asn-224 contacts K(+). Residues 224–229, 243–249, and 268–271 each bind GTP; these read NAGKSS, TDIAGTT, and DTAG. Ser-228 provides a ligand contact to Mg(2+). Residues Thr-243, Ile-245, and Thr-248 each contribute to the K(+) site. Residue Thr-249 coordinates Mg(2+). Residue Lys-452 coordinates (6S)-5-formyl-5,6,7,8-tetrahydrofolate.

The protein belongs to the TRAFAC class TrmE-Era-EngA-EngB-Septin-like GTPase superfamily. TrmE GTPase family. As to quaternary structure, homodimer. Heterotetramer of two MnmE and two MnmG subunits. K(+) serves as cofactor.

The protein localises to the cytoplasm. In terms of biological role, exhibits a very high intrinsic GTPase hydrolysis rate. Involved in the addition of a carboxymethylaminomethyl (cmnm) group at the wobble position (U34) of certain tRNAs, forming tRNA-cmnm(5)s(2)U34. The sequence is that of tRNA modification GTPase MnmE from Haemophilus influenzae (strain PittEE).